A 72-amino-acid polypeptide reads, in one-letter code: Translation initiation factor IF-1 (72 aa).

The region spanning 1-72 (MSKDDVIEMQ…TRGRITWRAK (72 aa)) is the S1-like domain.

This sequence belongs to the IF-1 family. As to quaternary structure, component of the 30S ribosomal translation pre-initiation complex which assembles on the 30S ribosome in the order IF-2 and IF-3, IF-1 and N-formylmethionyl-tRNA(fMet); mRNA recruitment can occur at any time during PIC assembly.

Its subcellular location is the cytoplasm. In terms of biological role, one of the essential components for the initiation of protein synthesis. Stabilizes the binding of IF-2 and IF-3 on the 30S subunit to which N-formylmethionyl-tRNA(fMet) subsequently binds. Helps modulate mRNA selection, yielding the 30S pre-initiation complex (PIC). Upon addition of the 50S ribosomal subunit IF-1, IF-2 and IF-3 are released leaving the mature 70S translation initiation complex. The sequence is that of Translation initiation factor IF-1 from Clostridium beijerinckii (strain ATCC 51743 / NCIMB 8052) (Clostridium acetobutylicum).